A 299-amino-acid polypeptide reads, in one-letter code: GTP cyclohydrolase FolE2 (299 aa).

This sequence belongs to the GTP cyclohydrolase IV family.

It catalyses the reaction GTP + H2O = 7,8-dihydroneopterin 3'-triphosphate + formate + H(+). Its pathway is cofactor biosynthesis; 7,8-dihydroneopterin triphosphate biosynthesis; 7,8-dihydroneopterin triphosphate from GTP: step 1/1. Converts GTP to 7,8-dihydroneopterin triphosphate. The protein is GTP cyclohydrolase FolE2 of Klebsiella pneumoniae.